A 287-amino-acid polypeptide reads, in one-letter code: ATP synthase gamma chain (287 aa).

This sequence belongs to the ATPase gamma chain family. In terms of assembly, F-type ATPases have 2 components, CF(1) - the catalytic core - and CF(0) - the membrane proton channel. CF(1) has five subunits: alpha(3), beta(3), gamma(1), delta(1), epsilon(1). CF(0) has three main subunits: a, b and c.

Its subcellular location is the cell inner membrane. In terms of biological role, produces ATP from ADP in the presence of a proton gradient across the membrane. The gamma chain is believed to be important in regulating ATPase activity and the flow of protons through the CF(0) complex. In Xanthomonas oryzae pv. oryzae (strain MAFF 311018), this protein is ATP synthase gamma chain.